The chain runs to 340 residues: Extracellular matrix protein-binding protein emp (340 aa).

The first 26 residues, 1–26 (MKKKLLVLTMSTLFATQIMNSNHAKA), serve as a signal peptide directing secretion.

It is found in the cell surface. Adhesin that binds to the host cell extracellular matrix proteins fibronectin, fibrinogen, collagen, and vitronectin. This chain is Extracellular matrix protein-binding protein emp (emp), found in Staphylococcus aureus (strain MSSA476).